Here is a 154-residue protein sequence, read N- to C-terminus: Myoglobin (154 aa).

The 147-residue stretch at 2 to 148 (GLSDGEWQLV…FRKDIAAKYK (147 aa)) folds into the Globin domain. At S4 the chain carries Phosphoserine. H65 provides a ligand contact to nitrite. Position 65 (H65) interacts with O2. T68 bears the Phosphothreonine mark. H94 provides a ligand contact to heme b.

It belongs to the globin family. In terms of assembly, monomeric.

Its subcellular location is the cytoplasm. The protein resides in the sarcoplasm. It catalyses the reaction Fe(III)-heme b-[protein] + nitric oxide + H2O = Fe(II)-heme b-[protein] + nitrite + 2 H(+). The enzyme catalyses H2O2 + AH2 = A + 2 H2O. Its function is as follows. Monomeric heme protein which primary function is to store oxygen and facilitate its diffusion within muscle tissues. Reversibly binds oxygen through a pentacoordinated heme iron and enables its timely and efficient release as needed during periods of heightened demand. Depending on the oxidative conditions of tissues and cells, and in addition to its ability to bind oxygen, it also has a nitrite reductase activity whereby it regulates the production of bioactive nitric oxide. Under stress conditions, like hypoxia and anoxia, it also protects cells against reactive oxygen species thanks to its pseudoperoxidase activity. This chain is Myoglobin (MB), found in Orcinus orca (Killer whale).